Reading from the N-terminus, the 307-residue chain is E3 ubiquitin-protein ligase PHF7 (307 aa).

The segment at 30–68 (SPVCLLCLQEPGDPEKLGEFLQKDNLCVHYFCLILSSRL) adopts a C2HC pre-PHD-type zinc-finger fold. Positions 33, 36, 58, and 61 each coordinate Zn(2+). Residues 67-92 (RLPQKGQPNRGLHGFMPEDIKREAVR) form a required for interaction and ubiquitination of the nucleosome core particle region. A PHD-type zinc finger spans residues 96–145 (KICFVCKKKGAAIRCQNDQCVQNFHLPCGQERGCLSQFFGEYKSYCRKHR). Residues Cys98, Cys101, Cys110, Cys115, His120, Cys123, Cys141, His144, Cys160, Cys163, Cys179, Cys180, His186, Cys189, Cys204, Cys207, Cys248, Cys253, Cys273, Cys276, His282, Cys285, Cys297, and Cys300 each coordinate Zn(2+). Residues 150-307 (IHQGSLGEES…NECLPASTTS (158 aa)) form a required for interaction with ubiquitinated UBE2D2 region. The segment at 160-208 (CVLCCENLSRTSVENIQSPCCSQAIYHRKCIQKYAHTSAKHFFKCPQCN) adopts an RING-type; degenerate zinc-finger fold. The tract at residues 244 to 301 (RYRHCDAPICLYEQGRDSFEDEGRWRLILCATCGSHGTHRDCSSLRPNSKKWECNECL) is required for association with and ubiquitination of H3.

In terms of assembly, interacts with MEF2C; the interaction promotes MEF2C binding to its transcription targets. Interacts with GATA4; the interaction promotes GATA4 binding to its transcription targets. Interacts with UBE2D2; the interaction inhibits cleavage of PHF7 and promotes association of the complex with the nucleosome core particle. In terms of tissue distribution, expressed in Leydig cells and in developing spermatids (at protein level). Highly expressed in Sertoli cells in testis.

The protein localises to the nucleus. It carries out the reaction S-ubiquitinyl-[E2 ubiquitin-conjugating enzyme]-L-cysteine + [acceptor protein]-L-lysine = [E2 ubiquitin-conjugating enzyme]-L-cysteine + N(6)-ubiquitinyl-[acceptor protein]-L-lysine.. It functions in the pathway protein modification; protein ubiquitination. Functionally, E3 ubiquitin-protein ligase which ubiquitinates histone H3 at 'Lys-14'. Required for male fertility, via inhibition of SPOP-mediated BRDT degradation when in the presence of acetylated histone H4 in early condensing spermatids. Stabilization of BRDT allows it to facilitate histone removal in early condensing spermatids and promote the progression of histone-to-protamine exchange. Promotes the expression of steroidogenesis proteins in the testes, and as a result plays a role in maintaining testosterone levels and repressing osteoclastogenesis. Promotes transcription of cardiac enhancer genes by facilitating binding of cardiac transcription factors such as MEF2C and GATA4 to target gene promoters. Ubiquitinates histone H4. Ubiquitinates histone H2A and H3 as part of the nucleosome core particle. This chain is E3 ubiquitin-protein ligase PHF7, found in Mus musculus (Mouse).